A 1001-amino-acid chain; its full sequence is ATP-dependent DNA/RNA helicase DHX36 (1001 aa).

The interval 1–44 (MSYDYHQSWSRDGGPRGSGQGSSGGGGGGSRGSGGGGGGRGGRG) is required for recruitment to cytoplasmic stress granules. A disordered region spans residues 1 to 54 (MSYDYHQSWSRDGGPRGSGQGSSGGGGGGSRGSGGGGGGRGGRGRHPAHLKGRE). Residues 1–97 (MSYDYHQSWS…IVQLLNSVQA (97 aa)) form a required for the pre-miR-134 transport region. The interval 1 to 193 (MSYDYHQSWS…KKTDPRYIEM (193 aa)) is necessary for nuclear and nucleolar caps localizations. Positions 15-41 (PRGSGQGSSGGGGGGSRGSGGGGGGRG) are enriched in gly residues. Residues 46–68 (HPAHLKGREIGLWYAKKQTQKNK) form a DSM (DHX36-specific motif) region. The segment at 46 to 98 (HPAHLKGREIGLWYAKKQTQKNKEAERQERAVVHMDERREEQIVQLLNSVQAK) is required for G4-DNA- and G4-RNA-binding. RecA-like domain stretches follow at residues 99-379 (TDKD…MIHI) and 380-621 (PGFT…DYQL). Residues 120–147 (EVSSEKKINSEKKLDNQEKKLLNQEKKT) adopt a coiled-coil conformation. A Phosphoserine modification is found at S154. The Helicase ATP-binding domain maps to 210-380 (VNLINNHQVT…FGNCPMIHIP (171 aa)). 226 to 231 (GCGKTT) serves as a coordination point for ATP. Positions 258–310 (RRISAISVAERVATERAESCGNGNSTGYQIRLQSRLPRKQGSILYCTTGIILQ) are necessary for interaction with single-stranded DNA at the 3'-end of the G4-DNA structure. The short motif at 327-330 (DEIH) is the DEAH box element. Mg(2+) contacts are provided by E328 and H330. The 171-residue stretch at 470 to 640 (ALIRYIVLEE…ELCLQIKILR (171 aa)) folds into the Helicase C-terminal domain. Positions 491 to 550 (WDNISTLHDLLMSQVMFKSDKFLIIPLHSLMPTVNQTQVFKKTPPGVRKIVIATNIAETS) are necessary for interaction with single-stranded DNA at the 3'-end of the G4-DNA structure. Positions 510 to 521 (DKFLIIPLHSLM) match the Nuclear localization signal motif. ATP is bound by residues S550 and 595-598 (RAGR). The tract at residues 622–691 (PEILRTPLEE…LGVHLARLPV (70 aa)) is WH domain. Necessary for interaction with single-stranded DNA at the 3'-end of the G4-DNA structure stretches follow at residues 631–690 (ELCL…ARLP), 842–853 (NLGKKRKMVKVH), and 863–893 (HPKS…IYLY). The segment at 834–898 (PKVAKIRLNL…SIYLYDCTEV (65 aa)) is OB-fold-like subdomains. An N6-acetyllysine modification is found at K940. S956 carries the post-translational modification Phosphoserine.

This sequence belongs to the DEAD box helicase family. DEAH subfamily. As to quaternary structure, found in a multi-helicase-TICAM1 complex at least composed of DHX36, DDX1, DDX21 and TICAM1; this complex exists in resting cells with or without dsRNA poly(I:C) ligand stimulation. Interacts (via C-terminus) with TICAM1 (via TIR domain). Interacts (via C-terminus) with DDX21; this interaction serves as bridges to TICAM1. Interacts with TERT; this interaction is dependent on the ability of DHX36 to bind to the G-quadruplex RNA (G4-RNA) structure present in the telomerase RNA template component (TERC). Interacts with DKC1; this interaction is dependent on the ability of DHX36 to bind to the G4-RNA structure present in TERC. Interacts with PARN; this interaction stimulates PARN to enhance uPA mRNA decay. Interacts with EXOSC3; this interaction occurs in a RNase-insensitive manner. Interacts with EXOSC10; this interaction occurs in a RNase-insensitive manner. Interacts with ILF3; this interaction occurs in a RNA-dependent manner. Interacts with ELAVL1; this interaction occurs in an RNA-dependent manner. Interacts with DDX5; this interaction occurs in a RNA-dependent manner. Interacts with DDX17; this interaction occurs in a RNA-dependent manner. Interacts with HDAC1; this interaction occurs in a RNA-dependent manner. Interacts with HDAC3; this interaction occurs in a RNA-dependent manner. Interacts with HDAC4. Interacts with AGO1. Interacts with AGO2. Interacts with ERCC6. Mg(2+) serves as cofactor. As to expression, expressed in spermatogonia stem cells and primary spermatocytes (at protein level). Expressed strongly in testis. Weakly expressed in heart, lung, liver, kidney, small intestine, spleen, lymphe node and thymus.

The protein resides in the nucleus. Its subcellular location is the cytoplasm. It is found in the cytosol. The protein localises to the stress granule. It localises to the nucleus speckle. The protein resides in the chromosome. Its subcellular location is the telomere. It is found in the mitochondrion. The protein localises to the perikaryon. It localises to the cell projection. The protein resides in the dendrite. Its subcellular location is the axon. The catalysed reaction is ATP + H2O = ADP + phosphate + H(+). Its activity is regulated as follows. ATPase activity is enhanced in the presence of homomeric poly(U) RNAs, but not by double-stranded DNA (dsDNA), double-stranded RNA (dsRNA) and tRNA. Its function is as follows. Multifunctional ATP-dependent helicase that unwinds G-quadruplex (G4) structures. Plays a role in many biological processes such as genomic integrity, gene expression regulations and as a sensor to initiate antiviral responses. G4 structures correspond to helical structures containing guanine tetrads. Binds with high affinity to and unwinds G4 structures that are formed in nucleic acids (G4-DNA and G4-RNA). Plays a role in genomic integrity. Converts the G4-RNA structure present in telomerase RNA template component (TREC) into a double-stranded RNA to promote P1 helix formation that acts as a template boundary ensuring accurate reverse transcription. Plays a role in transcriptional regulation. Resolves G4-DNA structures in promoters of genes, such as YY1, KIT/c-kit and ALPL and positively regulates their expression. Plays a role in post-transcriptional regulation. Unwinds a G4-RNA structure located in the 3'-UTR polyadenylation site of the pre-mRNA TP53 and stimulates TP53 pre-mRNA 3'-end processing in response to ultraviolet (UV)-induced DNA damage. Binds to the precursor-microRNA-134 (pre-miR-134) terminal loop and regulates its transport into the synapto-dendritic compartment. Involved in the pre-miR-134-dependent inhibition of target gene expression and the control of dendritic spine size. Plays a role in the regulation of cytoplasmic mRNA translation and mRNA stability. Binds to both G4-RNA structures and alternative non-quadruplex-forming sequence within the 3'-UTR of the PITX1 mRNA regulating negatively PITX1 protein expression. Binds to both G4-RNA structure in the 5'-UTR and AU-rich elements (AREs) localized in the 3'-UTR of NKX2-5 mRNA to either stimulate protein translation or induce mRNA decay in an ELAVL1-dependent manner, respectively. Also binds to ARE sequences present in several mRNAs mediating exosome-mediated 3'-5' mRNA degradation. Involved in cytoplasmic urokinase-type plasminogen activator (uPA) mRNA decay. Component of a multi-helicase-TICAM1 complex that acts as a cytoplasmic sensor of viral double-stranded RNA (dsRNA) and plays a role in the activation of a cascade of antiviral responses including the induction of pro-inflammatory cytokines via the adapter molecule TICAM1. Required for the early embryonic development and hematopoiesis. Involved in the regulation of cardioblast differentiation and proliferation during heart development. Involved in spermatogonia differentiation. May play a role in ossification. This is ATP-dependent DNA/RNA helicase DHX36 from Mus musculus (Mouse).